The chain runs to 793 residues: Protein PAT1 homolog (793 aa).

S200 and S208 each carry phosphoserine. 2 disordered regions span residues P203–R256 and M292–N312. Residues P219–L242 show a composition bias toward polar residues. 2 positions are modified to phosphoserine: S342 and S343. A disordered region spans residues R476 to L501. Positions N491–L501 are enriched in basic and acidic residues.

In terms of assembly, interacts with MPK4 and SUMM2. Phosphorylated at Ser-208 by MPK4 upon flg22 elicitation. Phosphorylated at Ser-200, Ser-342 and Ser-343 upon flg22 elicitation.

Its subcellular location is the cytoplasm. It is found in the P-body. Its function is as follows. Activator of mRNA decapping. Involved in mRNA decay via decapping. Involved in disease resistance in response to biotrophic and necrotrophic pathogens. Is part of a signaling pathway including MPK4 and the disease resistance protein SUMM2. In Arabidopsis thaliana (Mouse-ear cress), this protein is Protein PAT1 homolog.